The primary structure comprises 115 residues: Succinate dehydrogenase assembly factor 3, mitochondrial (115 aa).

Belongs to the complex I LYR family. SDHAF3 subfamily. Interacts with sdh2 within an sdh1-sdh2 subcomplex.

Its subcellular location is the mitochondrion matrix. Its function is as follows. Plays an essential role in the assembly of succinate dehydrogenase (SDH), an enzyme complex (also referred to as respiratory complex II) that is a component of both the tricarboxylic acid (TCA) cycle and the mitochondrial electron transport chain, and which couples the oxidation of succinate to fumarate with the reduction of ubiquinone (coenzyme Q) to ubiquinol. Promotes maturation of the iron-sulfur protein subunit sdh2 of the SDH catalytic dimer, protecting it from the deleterious effects of oxidants. May act together with SDHAF1. The chain is Succinate dehydrogenase assembly factor 3, mitochondrial from Schizosaccharomyces pombe (strain 972 / ATCC 24843) (Fission yeast).